The primary structure comprises 338 residues: Glycerol-3-phosphate dehydrogenase [NAD(P)+] (338 aa).

NADPH contacts are provided by Ser-13, Trp-14, and Lys-108. Sn-glycerol 3-phosphate contacts are provided by Lys-108, Gly-139, and Ser-141. Ala-143 serves as a coordination point for NADPH. Sn-glycerol 3-phosphate contacts are provided by Lys-194, Asp-247, Ser-257, Arg-258, and Asn-259. The Proton acceptor role is filled by Lys-194. Arg-258 is a binding site for NADPH. NADPH is bound by residues Val-282 and Glu-284.

The protein belongs to the NAD-dependent glycerol-3-phosphate dehydrogenase family.

Its subcellular location is the cytoplasm. It catalyses the reaction sn-glycerol 3-phosphate + NAD(+) = dihydroxyacetone phosphate + NADH + H(+). The catalysed reaction is sn-glycerol 3-phosphate + NADP(+) = dihydroxyacetone phosphate + NADPH + H(+). Its pathway is membrane lipid metabolism; glycerophospholipid metabolism. In terms of biological role, catalyzes the reduction of the glycolytic intermediate dihydroxyacetone phosphate (DHAP) to sn-glycerol 3-phosphate (G3P), the key precursor for phospholipid synthesis. This is Glycerol-3-phosphate dehydrogenase [NAD(P)+] from Streptococcus pneumoniae (strain Taiwan19F-14).